The sequence spans 142 residues: Large ribosomal subunit protein uL13 (142 aa).

The protein belongs to the universal ribosomal protein uL13 family. As to quaternary structure, part of the 50S ribosomal subunit.

Its function is as follows. This protein is one of the early assembly proteins of the 50S ribosomal subunit, although it is not seen to bind rRNA by itself. It is important during the early stages of 50S assembly. In Cellvibrio japonicus (strain Ueda107) (Pseudomonas fluorescens subsp. cellulosa), this protein is Large ribosomal subunit protein uL13.